We begin with the raw amino-acid sequence, 171 residues long: PBAN-type neuropeptides (171 aa).

An N-terminal signal peptide occupies residues 1–22 (MFRLYFFFNVICIFLAIRSAIG). Positions 23 to 47 (GEVPDATEQKINNFLASGKDSEDLS) are excised as a propeptide. Residue Leu-59 is modified to Leucine amide. The propeptide occupies 63 to 111 (TIASELHDEMMDEIDDNPLYYSGESPQRVASEIAQGTPYVVLLLTGRVL). The disordered stretch occupies residues 120–151 (HSTTPRLGRRDASSSNENNSRPPFAPRLGRNL). 3 positions are modified to leucine amide: Leu-126, Leu-147, and Leu-157. A propeptide spanning residues 160–171 (SFGAPVVDNFAY) is cleaved from the precursor.

The protein belongs to the pyrokinin family.

The protein resides in the secreted. Functionally, a hormone that controls sex pheromone production in females and pheromone responsiveness in male. Also mediates visceral muscle contractile activity (myotropic activity). This is PBAN-type neuropeptides from Aedes aegypti (Yellowfever mosquito).